The sequence spans 157 residues: MSPAAGVPELPALDGKGLRLAIVASTWHETICDALLDGARKVAVGAGIDDPTVVRVLGAIEIPVVAQALARTHDAVVALGVVIRGETPHFDYVCDAVTQGLTRVSLDASTPVANGVLTTNTEHQALDRAGLPDSAEDKGAQAAAAALSTALTLRQLS.

Residues tryptophan 27, 59–61 (AIE), and 81–83 (VVI) each bind 5-amino-6-(D-ribitylamino)uracil. (2S)-2-hydroxy-3-oxobutyl phosphate is bound at residue 86-87 (ET). Histidine 89 acts as the Proton donor in catalysis. Asparagine 114 is a 5-amino-6-(D-ribitylamino)uracil binding site. A (2S)-2-hydroxy-3-oxobutyl phosphate-binding site is contributed by arginine 128.

This sequence belongs to the DMRL synthase family. In terms of assembly, homopentamer.

It catalyses the reaction (2S)-2-hydroxy-3-oxobutyl phosphate + 5-amino-6-(D-ribitylamino)uracil = 6,7-dimethyl-8-(1-D-ribityl)lumazine + phosphate + 2 H2O + H(+). Its pathway is cofactor biosynthesis; riboflavin biosynthesis; riboflavin from 2-hydroxy-3-oxobutyl phosphate and 5-amino-6-(D-ribitylamino)uracil: step 1/2. Functionally, catalyzes the formation of 6,7-dimethyl-8-ribityllumazine by condensation of 5-amino-6-(D-ribitylamino)uracil with 3,4-dihydroxy-2-butanone 4-phosphate. This is the penultimate step in the biosynthesis of riboflavin. The protein is 6,7-dimethyl-8-ribityllumazine synthase of Mycolicibacterium vanbaalenii (strain DSM 7251 / JCM 13017 / BCRC 16820 / KCTC 9966 / NRRL B-24157 / PYR-1) (Mycobacterium vanbaalenii).